A 271-amino-acid polypeptide reads, in one-letter code: MANFTAADVKRLRELTGAGMLACKNALAETDGDFDKAVEALRIKGAKDVGKRAERATAEGLVAAKDGALIELNCETDFVAKNAEFQTLADQVVAAAAAAKPADVDALKGASIGDKTVEQAIAELSAKIGEKLELRRVAIFDGTVEAYLHRRSADLPPAVGVLVEYRGDDAAAAHAVALQIAALRARYLSRDDVPEDIVASERRIAEETARAEGKPEQALPKIVEGRLNGFFKDAVLLEQASVSDNKKTVKALLDVAGVMVTRFVRFEVGQA.

The interval 76 to 79 (TDFV) is involved in Mg(2+) ion dislocation from EF-Tu.

The protein belongs to the EF-Ts family.

The protein resides in the cytoplasm. Functionally, associates with the EF-Tu.GDP complex and induces the exchange of GDP to GTP. It remains bound to the aminoacyl-tRNA.EF-Tu.GTP complex up to the GTP hydrolysis stage on the ribosome. This Mycobacterium bovis (strain BCG / Pasteur 1173P2) protein is Elongation factor Ts.